A 443-amino-acid chain; its full sequence is Signal recognition particle 54 kDa protein (443 aa).

Residues 104 to 111 (GLQGSGKT), 184 to 188 (DTAGR), and 242 to 245 (TKLD) contribute to the GTP site.

It belongs to the GTP-binding SRP family. SRP54 subfamily. In terms of assembly, part of the signal recognition particle protein translocation system, which is composed of SRP and FtsY. Archaeal SRP consists of a 7S RNA molecule of 300 nucleotides and two protein subunits: SRP54 and SRP19.

It is found in the cytoplasm. It catalyses the reaction GTP + H2O = GDP + phosphate + H(+). Its function is as follows. Involved in targeting and insertion of nascent membrane proteins into the cytoplasmic membrane. Binds to the hydrophobic signal sequence of the ribosome-nascent chain (RNC) as it emerges from the ribosomes. The SRP-RNC complex is then targeted to the cytoplasmic membrane where it interacts with the SRP receptor FtsY. The chain is Signal recognition particle 54 kDa protein from Methanosarcina barkeri (strain Fusaro / DSM 804).